A 289-amino-acid chain; its full sequence is ATP synthase subunit a (289 aa).

The next 6 helical transmembrane spans lie at 43–63 (AFHL…LFIF), 103–123 (VIAP…AVDL), 160–180 (FCVF…GGFI), 193–213 (IFVQ…TLIA), 232–252 (VFIL…GLGV), and 259–279 (AVFH…LTIV).

This sequence belongs to the ATPase A chain family. In terms of assembly, F-type ATPases have 2 components, CF(1) - the catalytic core - and CF(0) - the membrane proton channel. CF(1) has five subunits: alpha(3), beta(3), gamma(1), delta(1), epsilon(1). CF(0) has three main subunits: a(1), b(2) and c(9-12). The alpha and beta chains form an alternating ring which encloses part of the gamma chain. CF(1) is attached to CF(0) by a central stalk formed by the gamma and epsilon chains, while a peripheral stalk is formed by the delta and b chains.

The protein resides in the cell inner membrane. In terms of biological role, key component of the proton channel; it plays a direct role in the translocation of protons across the membrane. The protein is ATP synthase subunit a of Pseudomonas putida (strain GB-1).